Here is a 506-residue protein sequence, read N- to C-terminus: ATP synthase subunit alpha, chloroplastic (506 aa).

Position 170–177 (170–177) interacts with ATP; it reads GDRQTGKT.

The protein belongs to the ATPase alpha/beta chains family. In terms of assembly, F-type ATPases have 2 components, CF(1) - the catalytic core - and CF(0) - the membrane proton channel. CF(1) has five subunits: alpha(3), beta(3), gamma(1), delta(1), epsilon(1). CF(0) has four main subunits: a, b, b' and c.

The protein resides in the plastid. It is found in the chloroplast thylakoid membrane. It carries out the reaction ATP + H2O + 4 H(+)(in) = ADP + phosphate + 5 H(+)(out). In terms of biological role, produces ATP from ADP in the presence of a proton gradient across the membrane. The alpha chain is a regulatory subunit. The chain is ATP synthase subunit alpha, chloroplastic from Chlorokybus atmophyticus (Soil alga).